The primary structure comprises 275 residues: Large ribosomal subunit protein uL2 (275 aa).

2 disordered regions span residues 36–55 (PKKR…RHKG) and 223–275 (VVMN…RHAR).

Belongs to the universal ribosomal protein uL2 family. Part of the 50S ribosomal subunit. Forms a bridge to the 30S subunit in the 70S ribosome.

Its function is as follows. One of the primary rRNA binding proteins. Required for association of the 30S and 50S subunits to form the 70S ribosome, for tRNA binding and peptide bond formation. It has been suggested to have peptidyltransferase activity; this is somewhat controversial. Makes several contacts with the 16S rRNA in the 70S ribosome. This chain is Large ribosomal subunit protein uL2, found in Thiobacillus denitrificans (strain ATCC 25259 / T1).